Here is a 658-residue protein sequence, read N- to C-terminus: Deoxynucleoside triphosphate triphosphohydrolase SAMHD1 (658 aa).

The segment at 23–68 (SQPRVSEVAMQSAPLEQPAKRPRCDGSPRTPPSTPPATANLSADDD) is disordered. Position 49 is a phosphoserine (serine 49). Residue threonine 52 is modified to Phosphothreonine. Serine 55 carries the post-translational modification Phosphoserine. Threonine 56 carries the post-translational modification Phosphothreonine. Residues serine 64 and serine 125 each carry the phosphoserine modification. The SAM domain occupies 77–142 (WEPEDVCSFL…IECIQQLSQS (66 aa)). The GTP site is built by lysine 148 and valine 149. A dGTP-binding site is contributed by asparagine 151. Aspartate 169, glutamine 174, and arginine 177 together coordinate GTP. Leucine 182 and valine 188 together coordinate dGTP. The HD domain maps to 196 to 348 (RFEHSLGVGY…GIDVDKWDYF (153 aa)). The Mn(2+) site is built by histidine 199, histidine 238, and aspartate 239. DGTP contacts are provided by aspartate 239, histidine 247, histidine 265, and glutamate 266. Histidine 265 is a catalytic residue. Residue aspartate 343 participates in Mn(2+) binding. Residues tyrosine 347, aspartate 351, arginine 365, arginine 395, lysine 397, asparagine 401, tyrosine 417, histidine 419, and lysine 420 each coordinate dGTP. GTP is bound by residues arginine 494 and lysine 498. A Glycyl lysine isopeptide (Lys-Gly) (interchain with G-Cter in SUMO2) cross-link involves residue lysine 509. Lysine 565 lines the GTP pocket. DGTP is bound at residue lysine 565. A Phosphothreonine modification is found at threonine 634. A (Microbial infection) Phosphothreonine modification is found at threonine 634.

This sequence belongs to the SAMHD1 family. In terms of assembly, homodimer; in absence of GTP and dNTP. Homotetramer; in GTP- and dNTP-bound form. Interacts with MRE11; leading to stimulate the exonuclease activity of MRE11. Interacts with RBBP8/CtIP. Interacts with RBBP8/CtIP. Interacts (via its C-terminus) with CD81. It depends on Zn(2+) as a cofactor. In terms of processing, phosphorylation at Thr-634 by CDK1 acts as a switch to control deoxynucleoside triphosphate (dNTPase)-dependent and -independent functions. Phosphorylation at Thr-634 takes place in cycling cells: it reduces the stability of the homotetramer, impairing the dNTPase activity and subsequent ability to restrict infection by viruses. It also inhibits ability to suppress LINE-1 retrotransposon activity. In contrast, phosphorylation at Thr-634 promotes DNA end resection at stalled replication forks in response to DNA damage. (Microbial infection) Phosphorylation at Thr-634 by mouse cytomegalovirus kinase M97 leads to a reduced level of dNTP hydrolase activity and the loss of viral restriction. Post-translationally, not phosphorylated by CDK1 at the C-terminus.

The protein localises to the nucleus. Its subcellular location is the chromosome. It catalyses the reaction a 2'-deoxyribonucleoside 5'-triphosphate + H2O = a 2'-deoxyribonucleoside + triphosphate + H(+). The catalysed reaction is dATP + H2O = 2'-deoxyadenosine + triphosphate + H(+). The enzyme catalyses dCTP + H2O = 2'-deoxycytidine + triphosphate + H(+). It carries out the reaction dGTP + H2O = 2'-deoxyguanosine + triphosphate + H(+). It catalyses the reaction dTTP + H2O = thymidine + triphosphate + H(+). With respect to regulation, allosterically activated and regulated via the combined actions of GTP and dNTPs (dATP, dGTP, dTTP and dCTP): Allosteric site 1 binds GTP, while allosteric site 2 binds dNTP. Allosteric activation promotes the formation of highly active homotetramers. Isoform 1: Phosphorylation at Thr-634 impairs homotetramerization, thereby inhibiting dNTPase activity, leading to reduced ability to restrict infection by viruses. Its function is as follows. Protein that acts both as a host restriction factor involved in defense response to virus and as a regulator of DNA end resection at stalled replication forks. Has deoxynucleoside triphosphate (dNTPase) activity, which is required to restrict infection by viruses: dNTPase activity reduces cellular dNTP levels to levels too low for retroviral reverse transcription to occur, blocking early-stage virus replication in dendritic and other myeloid cells. Likewise, suppresses LINE-1 retrotransposon activity. In addition to virus restriction, dNTPase activity acts as a regulator of DNA precursor pools by regulating dNTP pools. Phosphorylation at Thr-634 acts as a switch to control dNTPase-dependent and -independent functions: it inhibits dNTPase activity and ability to restrict infection by viruses, while it promotes DNA end resection at stalled replication forks. Functions during S phase at stalled DNA replication forks to promote the resection of gapped or reversed forks: acts by stimulating the exonuclease activity of MRE11, activating the ATR-CHK1 pathway and allowing the forks to restart replication. Its ability to promote degradation of nascent DNA at stalled replication forks is required to prevent induction of type I interferons, thereby preventing chronic inflammation. Ability to promote DNA end resection at stalled replication forks is independent of dNTPase activity. Enhances immunoglobulin hypermutation in B-lymphocytes by promoting transversion mutation. The chain is Deoxynucleoside triphosphate triphosphohydrolase SAMHD1 from Mus musculus (Mouse).